The sequence spans 95 residues: Opiscorpine-4 (95 aa).

An N-terminal signal peptide occupies residues methionine 1 to cysteine 19. In terms of domain architecture, BetaSPN-type CS-alpha/beta spans glutamate 55–tyrosine 95. Cystine bridges form between cysteine 58–cysteine 82, cysteine 68–cysteine 87, and cysteine 72–cysteine 89.

It belongs to the long chain scorpion toxin family. Class 3 subfamily. Expressed by the venom gland.

It localises to the secreted. Has antimicrobial activity against yeasts and bacteria. The sequence is that of Opiscorpine-4 from Opistophthalmus carinatus (African yellow leg scorpion).